A 195-amino-acid polypeptide reads, in one-letter code: UDP-N-acetylbacillosamine N-acetyltransferase (195 aa).

Residues 13–15 (SGH), 35–36 (DD), and G56 contribute to the substrate site. Residue H125 is the Proton acceptor of the active site. Acetyl-CoA contacts are provided by H134, I155, and G173.

It belongs to the transferase hexapeptide repeat family. Homotrimer.

The enzyme catalyses UDP-N-acetylbacillosamine + acetyl-CoA = UDP-N,N'-diacetylbacillosamine + CoA + H(+). Its pathway is protein modification; protein glycosylation. Functionally, acetyltransferase that modifies the UDP-4-amino-sugar to form UDP-N,N'-diacetylbacillosamine in the N-linked protein glycosylation pathway. The sequence is that of UDP-N-acetylbacillosamine N-acetyltransferase (pglD) from Campylobacter jejuni subsp. jejuni serotype O:2 (strain ATCC 700819 / NCTC 11168).